A 157-amino-acid polypeptide reads, in one-letter code: Ribosome maturation factor RimP (157 aa).

It belongs to the RimP family.

It localises to the cytoplasm. Functionally, required for maturation of 30S ribosomal subunits. In Limosilactobacillus reuteri (strain DSM 20016) (Lactobacillus reuteri), this protein is Ribosome maturation factor RimP.